Here is a 368-residue protein sequence, read N- to C-terminus: MEGLVFLNALATRLLFLLHSLVGVWRVTEVKKEPRYWLLALLNLLLFLETALTLKFKRGRGYKWFSPAIFLYLISIVPSLWLLELHHETQYCSIQAEGTSQNTSRKEDFNQTLTSNEQTSRADDLIETAKVFVNNLSTVCEKVWTLGLHQTFLLMLIIGRWLLPIGGGITRDQLSQLLLMFVGTAADILEFTSETLEEQNVRNSPALVYAILVIWTWSMLQFPLDLAVQNVVCPVSVTERGFPSLFFCQYSADLWNIGISVFIQDGPFLVVRLILMTYFKVINQMLVFFAAKNFLVVVLQLYRLVVLALAVRASLRSQSEGLKGEHGCRAQTSESGPSQRDWQNESKEGLAIPLRGSPVTSDDSHHTP.

3 helical membrane-spanning segments follow: residues 4–24, 36–56, and 65–85; these read LVFLNALATRLLFLLHSLVGV, YWLLALLNLLLFLETALTLKF, and FSPAIFLYLISIVPSLWLLEL. N-linked (GlcNAc...) asparagine glycosylation occurs at Asn110. 5 helical membrane-spanning segments follow: residues 150–170, 177–197, 208–228, 257–277, and 281–301; these read QTFLLMLIIGRWLLPIGGGIT, LLLMFVGTAADILEFTSETLE, VYAILVIWTWSMLQFPLDLAV, IGISVFIQDGPFLVVRLILMT, and VINQMLVFFAAKNFLVVVLQL. Residues 324 to 368 are disordered; it reads GEHGCRAQTSESGPSQRDWQNESKEGLAIPLRGSPVTSDDSHHTP. A compositionally biased stretch (polar residues) spans 330-341; that stretch reads AQTSESGPSQRD.

The protein resides in the membrane. The sequence is that of Transmembrane protein 26 (TMEM26) from Homo sapiens (Human).